The following is a 984-amino-acid chain: MYCBP-associated protein (984 aa).

Disordered stretches follow at residues 61-88 (LEAS…EEPE) and 218-240 (GESK…PQHN). The span at 218 to 231 (GESKQKAPKEEKRP) shows a compositional bias: basic and acidic residues. A Phosphothreonine modification is found at threonine 613. Serine 619 carries the post-translational modification Phosphoserine. Disordered regions lie at residues 693-729 (SPIS…KSIM) and 842-917 (PEEQ…ASQD). The segment covering 862–910 (AGKEERKGAAQEKKQLGIKDKEDKKGAKLLGKEDRPNSKKHKAKDDKKV) has biased composition (basic and acidic residues).

Interacts with MYCBP. In terms of tissue distribution, expressed specifically in testis.

The protein localises to the cytoplasm. The protein resides in the membrane. Functionally, may play a role in spermatogenesis. May be involved in synaptic processes. The protein is MYCBP-associated protein of Homo sapiens (Human).